A 383-amino-acid chain; its full sequence is Mating-type protein MAT-1 (383 aa).

Positions 60 to 117 form a DNA-binding region, alpha box; it reads KARKALNAFVGFRCYYVTIPMFKSWPMKKLSNLIGLLWEADPNKSLWSLMAKAWSTIR.

This sequence belongs to the MATALPHA1 family.

The protein localises to the nucleus. Its function is as follows. Mating type proteins are sequence specific DNA-binding proteins that act as master switches in fungal differentiation by controlling gene expression in a cell type-specific fashion. Transcriptional activator that induces the transcription of alpha-specific genes. The chain is Mating-type protein MAT-1 (MAT1) from Cochliobolus heterostrophus (Southern corn leaf blight fungus).